The chain runs to 317 residues: Glutathione synthetase (317 aa).

In terms of domain architecture, ATP-grasp spans 126–311; sequence KFFATQFTQC…IGDKLMDAIA (186 aa). 152–208 is a binding site for ATP; it reads AAEHRDIILKPLDGMGGSSIFRHREGDPNLSVILETLTQHGSQQIMAQRYLPEIKDG. Positions 282 and 284 each coordinate Mg(2+).

Belongs to the prokaryotic GSH synthase family. It depends on Mg(2+) as a cofactor. Mn(2+) is required as a cofactor.

The enzyme catalyses gamma-L-glutamyl-L-cysteine + glycine + ATP = glutathione + ADP + phosphate + H(+). It participates in sulfur metabolism; glutathione biosynthesis; glutathione from L-cysteine and L-glutamate: step 2/2. The polypeptide is Glutathione synthetase (Pseudomonas aeruginosa (strain ATCC 15692 / DSM 22644 / CIP 104116 / JCM 14847 / LMG 12228 / 1C / PRS 101 / PAO1)).